The sequence spans 415 residues: Alditol oxidase (415 aa).

The FAD-binding PCMH-type domain maps to 12 to 179; that stretch reads ITYTAKEVHR…TALTLDLEPA (168 aa). Residue His46 is modified to Pros-8alpha-FAD histidine. FAD contacts are provided by residues Ser106, Ser111, Gly114, 118-121, and Val169; that span reads TGTH. Xylitol is bound at residue Ser106. Xylitol is bound by residues Glu317, Arg319, and Thr342. Arg319 lines the FAD pocket. An FAD-binding site is contributed by His369. Lys372 provides a ligand contact to xylitol.

It belongs to the oxygen-dependent FAD-linked oxidoreductase family. In terms of assembly, monomer. The cofactor is FAD.

It carries out the reaction an alditol + O2 = an aldose + H2O2. The enzyme catalyses xylitol + O2 = D-xylose + H2O2. The catalysed reaction is D-sorbitol + O2 = D-glucose + H2O2. Oxidase that performs selective oxidation of the terminal primary hydroxyl group of several alditols, with a reduction of O2 to H2O2. Shows highest activity on xylitol and D-sorbitol, and to a lesser extent, can also use galactitol, D-mannitol, and D-arabitol as substrates in vitro. Is not active on D-glucose, D-xylose, D-galactose, D-mannose, D-fructose, L-sorbose, L-fucose, myoinositol, glycerol, ethyl alcohol, and meso-erythritol. The chain is Alditol oxidase from Streptomyces sp. (strain IKD472 / FERM P-14339).